The following is a 291-amino-acid chain: Glycine--tRNA ligase alpha subunit (291 aa).

Belongs to the class-II aminoacyl-tRNA synthetase family. In terms of assembly, tetramer of two alpha and two beta subunits.

It localises to the cytoplasm. The enzyme catalyses tRNA(Gly) + glycine + ATP = glycyl-tRNA(Gly) + AMP + diphosphate. The chain is Glycine--tRNA ligase alpha subunit from Geobacter metallireducens (strain ATCC 53774 / DSM 7210 / GS-15).